A 287-amino-acid polypeptide reads, in one-letter code: MIKIGAHMPISKGFDRVPQDTVNIGGNAYQIFPHNARSWSAKLPSDDITTKFKREMKKYGIDWENAFCHSGYLINLASPKEDIWQKSVELLKKEVEICRKLGIRYLNIHPGSHLGAGEKEGTERIVRGLNEVLNSTEDVVILLENVSQKGGNIGYKLDQLKKIRDLVDQKDRVAITYDTCHGFDSGYDITKKEGVEALLNEIETLFGLERLKMIHLNDSKYPLGAAKDRHERIGSGFIGEEGFAVFFSFKEIQKVPWILETPGGNEEHAEDIKKVFEIIEKFDIEVD.

H69, H109, E144, D178, H181, H215, D228, H230, and E260 together coordinate Zn(2+).

The protein belongs to the AP endonuclease 2 family. Requires Zn(2+) as cofactor.

The enzyme catalyses Endonucleolytic cleavage to 5'-phosphooligonucleotide end-products.. Its function is as follows. Endonuclease IV plays a role in DNA repair. It cleaves phosphodiester bonds at apurinic or apyrimidinic (AP) sites, generating a 3'-hydroxyl group and a 5'-terminal sugar phosphate. This Thermotoga petrophila (strain ATCC BAA-488 / DSM 13995 / JCM 10881 / RKU-1) protein is Probable endonuclease 4.